The chain runs to 311 residues: Olfactory receptor 10G9 (311 aa).

At 1–23 (MSKTSLVTAFILTGLPHAPGLDA) the chain is on the extracellular side. The chain crosses the membrane as a helical span at residues 24 to 44 (PLFGIFLVVYVLTVLGNLLIL). Over 45–52 (LVIRVDSH) the chain is Cytoplasmic. A helical transmembrane segment spans residues 53 to 73 (LHTPMYYFLTNLSFIDMWFST). Over 74–98 (VTVPKMLMTLVSPSGRAISFHSCVA) the chain is Extracellular. A disulfide bond links Cys96 and Cys188. A helical transmembrane segment spans residues 99-119 (QLYFFHFLGSTECFLYTVMSY). At 120 to 138 (DRYLAISYPLRYTSMMSGS) the chain is on the cytoplasmic side. A helical membrane pass occupies residues 139–159 (RCALLATSTWLSGSLHSAVQT). Topologically, residues 160–196 (ILTFHLPYCGPNQIQHYLCDAPPILKLACADTSANEM) are extracellular. Residues 197 to 216 (VIFVDIGLVASGCFLLIVLS) form a helical membrane-spanning segment. Residues 217–236 (YVSIVCSILRIHTSEGRHRA) lie on the Cytoplasmic side of the membrane. A helical transmembrane segment spans residues 237–257 (FQTCASHCIVVLCFFVPCVFI). The Extracellular segment spans residues 258-268 (YLRPGSRDVVD). Residues 269–289 (GVVAIFYTVLTPLLNPVVYTL) form a helical membrane-spanning segment. Residues 290-311 (RNKEVKKAVLKLRDKVAHSQGE) are Cytoplasmic-facing.

This sequence belongs to the G-protein coupled receptor 1 family.

The protein localises to the cell membrane. Functionally, odorant receptor. This Homo sapiens (Human) protein is Olfactory receptor 10G9 (OR10G9).